The sequence spans 325 residues: Probable 2-ketogluconate reductase (325 aa).

Residues 158–159, T211, 238–240, and D264 each bind NAD(+); these read RI and ISR. R240 is a catalytic residue. E269 is an active-site residue. Residue H288 is the Proton donor of the active site. Position 288-291 (288-291) interacts with NAD(+); the sequence is HIGS.

Belongs to the D-isomer specific 2-hydroxyacid dehydrogenase family.

The catalysed reaction is D-gluconate + NADP(+) = 2-dehydro-D-gluconate + NADPH + H(+). This is Probable 2-ketogluconate reductase (yvcT) from Bacillus subtilis (strain 168).